A 680-amino-acid polypeptide reads, in one-letter code: MDHSSSSNSCFSVGSTSPGAVVLLYSKELKKWDEFEDVLEERRHVSDLKFAMKCYTPLVYKGITPCKPSDIKCSVLNSEEIHYVIKQLSKESLQPVEVLREEACEILDEMSHKLRLGAIRFFAFALSKIFKQIFSKVRVNEEGIQKLQRAIQEHPVVLLPSHRSYIDFLMLSFLLYNYDLPVPVIAAGMDFLGMKMVGELLRMSGAFFMRRTFGGNKLYWAVFSEYVKTMLRNGYAPVEFFLEGTRSRSAKTLTPKFGLLNIVMEPFFKREVFDTYLVPISISYDRILEETLYAYELLGVPKPKESTTGLLKARRILSEKFGNIHVYFGDPVSLRSLAAGRMGRSPYNLVPRYIPQKQSEEMHTFVTEVAYKMQLLQIQNLVLSPWPLIVAVLLQNRPSIDFDALLEKTLWLKGLTQAFGGFLTWPDNEPAEAVIQSSILLHSNIVSLVKDRVILKMECGDSELVDGLIFQHITLLMCLAYRNQLLNVFVRPSLVAMALQMTPGFRKEDVYSCFRFLCSVFSDEFIFLPGNALKDFEEGCYLLCKSEAIQVMTRDILVTEKGNSVLEFLIGLFKPFVESYQIICKYLLNEEEDYFTEKQYFIRVRKFTSQLLDQGASQCYDVLSSDVQKNALAAFVRLGVVEKKKVNNDYIFNVNEPATTKLEEMLGCKTPVGKPATAKL.

2 positions are modified to phosphoserine: serine 12 and serine 17. Positions 162-167 (HRSYID) match the HXXXXD motif motif. An N6-acetyllysine modification is found at lysine 643. The Microbody targeting signal motif lies at 678-680 (AKL).

The protein belongs to the GPAT/DAPAT family. In terms of assembly, part of a heterotrimeric complex composed of GNPAT, AGPS and a modified form of GNPAT.

It localises to the peroxisome membrane. It carries out the reaction dihydroxyacetone phosphate + an acyl-CoA = a 1-acylglycerone 3-phosphate + CoA. The enzyme catalyses dihydroxyacetone phosphate + hexadecanoyl-CoA = 1-hexadecanoylglycerone 3-phosphate + CoA. Its pathway is membrane lipid metabolism; glycerophospholipid metabolism. Dihydroxyacetonephosphate acyltransferase catalyzing the first step in the biosynthesis of plasmalogens, a subset of phospholipids that differ from other glycerolipids by having an alkyl chain attached through a vinyl ether linkage at the sn-1 position of the glycerol backbone, and which unique physical properties have an impact on various aspects of cell signaling and membrane biology. This Bos taurus (Bovine) protein is Dihydroxyacetone phosphate acyltransferase.